A 61-amino-acid polypeptide reads, in one-letter code: Bacteriocin leucocin-A (61 aa).

Positions 1–24 (MMNMKPTESYEQLDNSALEQVVGG) are excised as a propeptide. An intrachain disulfide couples C33 to C38.

This sequence belongs to the bacteriocin class IIA/YGNGV family.

It localises to the secreted. Inhibits a wide spectrum of lactic acid bacteria. The polypeptide is Bacteriocin leucocin-A (lcnA) (Leuconostoc gelidum).